The primary structure comprises 149 residues: Ribonuclease-like 3 (149 aa).

Residues 1 to 22 (MGIHQCTAVVLLLLCASLSTYG) form the signal peptide. Q23 is modified (pyrrolidone carboxylic acid). Residue H38 is the Proton acceptor of the active site. 3 cysteine pairs are disulfide-bonded: C48–C109, C66–C120, and C84–C135. Residue 67 to 71 (KEVNT) participates in substrate binding. H142 functions as the Proton donor in the catalytic mechanism.

It belongs to the pancreatic ribonuclease family. Cleavage between Arg-55 and Arg-56 is catalyzed by a membrane-localized Gram-negative bacterium protease (OmpT in E.coli). The excised fragment is then transported to the bacterium cytosol for cleavage of the disulfide bridge linking Cys-48 and Cys-109, thus separating the N-terminal and LF-ZF3. LF-ZF3 but not the N-terminal peptide possesses bactericidal activity. As to expression, strongly expressed in the adult liver and gut, and weakly in the heart and testis.

It is found in the secreted. In terms of biological role, ribonuclease. Angiogenic. Plays a role in host defense. Exhibits strong antibacterial activity against Gram-negative bacteria but mild antibacterial activity against Gram-positive bacteria. The RNase activity is not required for the bactericidal activity. This chain is Ribonuclease-like 3, found in Danio rerio (Zebrafish).